A 304-amino-acid chain; its full sequence is tRNA-5-methyluridine(54) 2-sulfurtransferase (304 aa).

The Zn(2+) site is built by cysteine 3, cysteine 6, cysteine 22, and histidine 25. ATP-binding residues include alanine 53 and isoleucine 79. The [4Fe-4S] cluster site is built by cysteine 131 and cysteine 134. The ATP site is built by arginine 138 and glycine 157. Cysteine 224 provides a ligand contact to [4Fe-4S] cluster. 4 residues coordinate Zn(2+): cysteine 274, cysteine 277, cysteine 286, and cysteine 289.

The protein belongs to the TtcA family. TtuA subfamily. As to quaternary structure, homodimer. [4Fe-4S] cluster serves as cofactor. Mg(2+) is required as a cofactor.

It catalyses the reaction 5-methyluridine(54) in tRNA + hydrogen sulfide + ATP = 5-methyl-2-thiouridine(54) in tRNA + AMP + diphosphate. The protein operates within tRNA modification. Catalyzes the ATP-dependent 2-thiolation of 5-methyluridine residue at position 54 in the T loop of tRNAs, leading to 5-methyl-2-thiouridine (m(5)s(2)U or s(2)T). This modification allows thermal stabilization of tRNAs in thermophilic microorganisms, and is required for cell growth at high temperatures. Can use free sulfide as sulfur source in vitro. This Thermotoga maritima (strain ATCC 43589 / DSM 3109 / JCM 10099 / NBRC 100826 / MSB8) protein is tRNA-5-methyluridine(54) 2-sulfurtransferase.